The following is an 897-amino-acid chain: Coiled-coil domain-containing protein lobo (897 aa).

Residues 27–49 form a disordered region; sequence EIDEQRRSQGSESDFADEMEGEF. Positions 40 to 49 are enriched in acidic residues; sequence DFADEMEGEF. Coiled-coil stretches lie at residues 269-306 and 801-858; these read DLKS…DLEL and SLLN…QRLT.

The protein belongs to the DRC7 family. Testis-specific (at protein level).

It is found in the cell projection. It localises to the cilium. The protein resides in the flagellum. The protein localises to the cytoplasm. Its subcellular location is the cytoskeleton. It is found in the cilium axoneme. Its function is as follows. Key component of the nexin-dynein regulatory complex (N-DRC), essential for N-DRC integrity. Involved in the regulation of flagellar motility. Involved in sperm motility. Required for the sperm to enter in the coiled storage seminal receptacle (SR) tubule. This is Coiled-coil domain-containing protein lobo (lobo) from Drosophila melanogaster (Fruit fly).